Here is a 132-residue protein sequence, read N- to C-terminus: Small ribosomal subunit protein uS8 (132 aa).

The protein belongs to the universal ribosomal protein uS8 family. As to quaternary structure, part of the 30S ribosomal subunit. Contacts proteins S5 and S12.

Its function is as follows. One of the primary rRNA binding proteins, it binds directly to 16S rRNA central domain where it helps coordinate assembly of the platform of the 30S subunit. The sequence is that of Small ribosomal subunit protein uS8 from Rickettsia rickettsii (strain Sheila Smith).